The primary structure comprises 759 residues: uncharacterized protein (759 aa).

Low complexity-rich tracts occupy residues 1–36 (MSSNNNFDNNKNNNNNNNSNQNNNNIDNGGNNNETN), 142–211 (QQQN…NQHH), and 221–347 (NHSN…GSSS). Disordered stretches follow at residues 1-47 (MSSN…AQTP), 142-380 (QQQN…PSIG), 409-428 (NNNCTESNDDDSPLNGGLGY), 463-504 (IING…NFEN), and 654-759 (LVDD…YLNK). Polar residues predominate over residues 348-360 (PFQDQARSPSSSF). Low complexity-rich tracts occupy residues 463–495 (IINGFNKNNNNNNNNNNNNNNSNNNNNNNGNNN) and 660–747 (HISN…DNNN).

This is an uncharacterized protein from Dictyostelium discoideum (Social amoeba).